Here is a 364-residue protein sequence, read N- to C-terminus: MKTQYRIAVLPGDGIGPEVMREAYKILKILKNNFLLSFEIEEFNVGGIAIDQEGLALPKKTLLGCEKSDAILFGSVGGKKWDNFPIEERPERAALLPLRKHFNLFANLRPAKIYSELKHLSPLRSNIVRDGFDILCIRELTGGIYFGQPSGRRLEKNNIEYAFDTEIYYDYEINRIAHLAFQLAQSRSHKVCSIDKSNVLNSSILWKEIVQKVSKNYPDVDLSHLYIDNAIMQIIKNPNQFDVLLCPNLFGDIISDECAIITGSIGMLPSASLNEKKFGLYEPAGGSAPDIAGKNIANPIAQILSLSMLVRYGMNLKDIADKIDKSVLSVLKKGYRTADISNNNNYLKTNEMGDVIANALISGE.

78–91 (GKKWDNFPIEERPE) is an NAD(+) binding site. Substrate is bound by residues R99, R109, R138, and D228. 3 residues coordinate Mg(2+): D228, D252, and D256. NAD(+) is bound at residue 286–298 (GSAPDIAGKNIAN).

The protein belongs to the isocitrate and isopropylmalate dehydrogenases family. LeuB type 1 subfamily. As to quaternary structure, homodimer. The cofactor is Mg(2+). Mn(2+) is required as a cofactor.

Its subcellular location is the cytoplasm. It catalyses the reaction (2R,3S)-3-isopropylmalate + NAD(+) = 4-methyl-2-oxopentanoate + CO2 + NADH. The protein operates within amino-acid biosynthesis; L-leucine biosynthesis; L-leucine from 3-methyl-2-oxobutanoate: step 3/4. In terms of biological role, catalyzes the oxidation of 3-carboxy-2-hydroxy-4-methylpentanoate (3-isopropylmalate) to 3-carboxy-4-methyl-2-oxopentanoate. The product decarboxylates to 4-methyl-2 oxopentanoate. In Buchnera aphidicola subsp. Uroleucon obscurum, this protein is 3-isopropylmalate dehydrogenase.